The sequence spans 552 residues: Hyaluronan synthase 2 (552 aa).

At 1–11 the chain is on the cytoplasmic side; it reads MHCERFLCILR. A helical membrane pass occupies residues 12–32; the sequence is IIGTTLFGVSLLLGITAAYIV. Over 33–45 the chain is Extracellular; that stretch reads GYQFIQTDNYYFS. A helical transmembrane segment spans residues 46–66; that stretch reads FGLYGAFLASHLIIQSLFAFL. At 67–374 the chain is on the cytoplasmic side; it reads EHRKMKKSLE…NAMWFHKHHL (308 aa). At T110 the chain carries Phosphothreonine. K190 participates in a covalent cross-link: Glycyl lysine isopeptide (Lys-Gly) (interchain with G-Cter in ubiquitin). O-linked (GlcNAc) serine glycosylation occurs at S221. T328 is subject to Phosphothreonine. The chain crosses the membrane as a helical span at residues 375-395; it reads WMTYEAVITGFFPFFLIATVI. At 396–402 the chain is on the extracellular side; sequence QLFYRGK. Residues 403 to 423 traverse the membrane as a helical segment; the sequence is IWNILLFLLTVQLVGLIKSSF. The Cytoplasmic portion of the chain corresponds to 424-429; that stretch reads ASCLRG. The helical transmembrane segment at 430 to 450 threads the bilayer; it reads NIVMVFMSLYSVLYMSSLLPA. The Extracellular segment spans residues 451-475; it reads KMFAIATINKAGWGTSGRKTIVVNF. Residues 476-496 form a helical membrane-spanning segment; it reads IGLIPVSVWFTILLGGVIFTI. At 497 to 510 the chain is on the cytoplasmic side; sequence YKESKKPFSESKQT. A helical membrane pass occupies residues 511–531; sequence VLIVGTLLYACYWVMLLTLYV. Residues 532 to 552 lie on the Extracellular side of the membrane; sequence VLINKCGRRKKGQQYDMVLDV.

Belongs to the NodC/HAS family. As to quaternary structure, homodimer; dimerization promotes enzymatic activity. Forms heterodimer with HAS3. Forms heterodimer with HAS1. Mg(2+) serves as cofactor. Post-translationally, phosphorylation at Thr-328 is essential for hyaluronan synthase activity. In terms of processing, O-GlcNAcylation at Ser-221 increases the stability of HAS2 and plasma membrane localization. Ubiquitination at Lys-190; this ubiquitination is essential for hyaluronan synthase activity and homo- or hetero-oligomerization. Can also be poly-ubiquitinated. Deubiquitinated by USP17L22/USP17 and USP4. USP17L22/USP17 efficiently removes 'Lys-63'- and 'Lys-48'-linked polyubiquitin chains, whereas USP4 preferentially removes monoubiquitination and, partially, both 'Lys-63'- and 'Lys-48'-linked polyubiquitin chain. In terms of tissue distribution, overexpressed in skin fibroblasts.

Its subcellular location is the cell membrane. It is found in the endoplasmic reticulum membrane. The protein localises to the vesicle. It localises to the golgi apparatus membrane. The protein resides in the lysosome. It carries out the reaction [hyaluronan](n) + UDP-N-acetyl-alpha-D-glucosamine = N-acetyl-beta-D-glucosaminyl-(1-&gt;4)-[hyaluronan](n) + UDP + H(+). It catalyses the reaction N-acetyl-beta-D-glucosaminyl-(1-&gt;4)-[hyaluronan](n) + UDP-alpha-D-glucuronate = [hyaluronan](n+1) + UDP + H(+). It participates in glycan biosynthesis; hyaluronan biosynthesis. Functionally, catalyzes the addition of GlcNAc or GlcUA monosaccharides to the nascent hyaluronan polymer. Therefore, it is essential to hyaluronan synthesis a major component of most extracellular matrices that has a structural role in tissues architectures and regulates cell adhesion, migration and differentiation. This is one of three isoenzymes responsible for cellular hyaluronan synthesis and it is particularly responsible for the synthesis of high molecular mass hyaluronan. In Heterocephalus glaber (Naked mole rat), this protein is Hyaluronan synthase 2 (Has2).